The sequence spans 220 residues: LHFPL tetraspan subfamily member 1 protein (220 aa).

A signal peptide spans 1 to 20 (MRSSLTMVGTLWAFLSLVTA). 2 helical membrane passes run 86–106 (VVTGAGCALLLLVALAAVLGC) and 122–142 (AAQFVGGLLISSGCALYPLGW). An N-linked (GlcNAc...) asparagine glycan is attached at Asn153. The helical transmembrane segment at 165 to 185 (LGWAYYCAGGGAAAAMLICTW) threads the bilayer.

The protein belongs to the LHFP family. In terms of tissue distribution, widely expressed. Expressed at high levels in lung, thymus, skeletal muscle, colon and ovary.

The protein localises to the membrane. This is LHFPL tetraspan subfamily member 1 protein from Homo sapiens (Human).